The following is a 256-amino-acid chain: Ubiquinone/menaquinone biosynthesis C-methyltransferase UbiE (256 aa).

S-adenosyl-L-methionine-binding positions include Thr79, Asp100, and 128 to 129; that span reads DA.

Belongs to the class I-like SAM-binding methyltransferase superfamily. MenG/UbiE family.

The catalysed reaction is a 2-demethylmenaquinol + S-adenosyl-L-methionine = a menaquinol + S-adenosyl-L-homocysteine + H(+). It catalyses the reaction a 2-methoxy-6-(all-trans-polyprenyl)benzene-1,4-diol + S-adenosyl-L-methionine = a 5-methoxy-2-methyl-3-(all-trans-polyprenyl)benzene-1,4-diol + S-adenosyl-L-homocysteine + H(+). It functions in the pathway quinol/quinone metabolism; menaquinone biosynthesis; menaquinol from 1,4-dihydroxy-2-naphthoate: step 2/2. It participates in cofactor biosynthesis; ubiquinone biosynthesis. Functionally, methyltransferase required for the conversion of demethylmenaquinol (DMKH2) to menaquinol (MKH2) and the conversion of 2-polyprenyl-6-methoxy-1,4-benzoquinol (DDMQH2) to 2-polyprenyl-3-methyl-6-methoxy-1,4-benzoquinol (DMQH2). The polypeptide is Ubiquinone/menaquinone biosynthesis C-methyltransferase UbiE (Ectopseudomonas mendocina (strain ymp) (Pseudomonas mendocina)).